We begin with the raw amino-acid sequence, 268 residues long: Glutamate racemase (268 aa).

Residues 10 to 11 and 42 to 43 each bind substrate; these read DS and YG. The Proton donor/acceptor role is filled by Cys-73. 74–75 serves as a coordination point for substrate; the sequence is NT. Cys-184 serves as the catalytic Proton donor/acceptor. 185-186 serves as a coordination point for substrate; that stretch reads TH.

This sequence belongs to the aspartate/glutamate racemases family.

The catalysed reaction is L-glutamate = D-glutamate. The protein operates within cell wall biogenesis; peptidoglycan biosynthesis. In terms of biological role, provides the (R)-glutamate required for cell wall biosynthesis. This chain is Glutamate racemase, found in Limosilactobacillus fermentum (strain NBRC 3956 / LMG 18251) (Lactobacillus fermentum).